The chain runs to 339 residues: Histidine protein methyltransferase 1 (339 aa).

A phosphoserine mark is found at Ser333 and Ser338.

The protein belongs to the methyltransferase superfamily. METTL18 family.

The protein resides in the cytoplasm. Its subcellular location is the nucleus. The enzyme catalyses L-histidyl-[protein] + S-adenosyl-L-methionine = N(tele)-methyl-L-histidyl-[protein] + S-adenosyl-L-homocysteine + H(+). Protein-histidine N-methyltransferase that mediates methylation of target protein on His residues. In Schizosaccharomyces pombe (strain 972 / ATCC 24843) (Fission yeast), this protein is Histidine protein methyltransferase 1.